Reading from the N-terminus, the 286-residue chain is Penicillin-insensitive murein endopeptidase (286 aa).

An N-terminal signal peptide occupies residues 1–22; the sequence is MNKILLKTTIIFTALFSLNVVA. 5 residues coordinate Zn(2+): His117, His120, Asp127, Asp152, and His218.

Belongs to the peptidase M74 family. The cofactor is Zn(2+).

It localises to the periplasm. Its function is as follows. Murein endopeptidase that cleaves the D-alanyl-meso-2,6-diamino-pimelyl amide bond that connects peptidoglycan strands. Likely plays a role in the removal of murein from the sacculus. In Haemophilus influenzae (strain ATCC 51907 / DSM 11121 / KW20 / Rd), this protein is Penicillin-insensitive murein endopeptidase (mepA).